We begin with the raw amino-acid sequence, 263 residues long: Acyl-[acyl-carrier-protein]--UDP-N-acetylglucosamine O-acyltransferase (263 aa).

It belongs to the transferase hexapeptide repeat family. LpxA subfamily. Homotrimer.

It is found in the cytoplasm. The enzyme catalyses a (3R)-hydroxyacyl-[ACP] + UDP-N-acetyl-alpha-D-glucosamine = a UDP-3-O-[(3R)-3-hydroxyacyl]-N-acetyl-alpha-D-glucosamine + holo-[ACP]. The protein operates within glycolipid biosynthesis; lipid IV(A) biosynthesis; lipid IV(A) from (3R)-3-hydroxytetradecanoyl-[acyl-carrier-protein] and UDP-N-acetyl-alpha-D-glucosamine: step 1/6. Involved in the biosynthesis of lipid A, a phosphorylated glycolipid that anchors the lipopolysaccharide to the outer membrane of the cell. The chain is Acyl-[acyl-carrier-protein]--UDP-N-acetylglucosamine O-acyltransferase from Xanthomonas oryzae pv. oryzae (strain PXO99A).